Consider the following 132-residue polypeptide: Small ribosomal subunit protein uS11 (132 aa).

Basic residues predominate over residues 1-16 (MAAGMKGKRSRRRKER). Residues 1-20 (MAAGMKGKRSRRRKERKNVE) are disordered.

This sequence belongs to the universal ribosomal protein uS11 family. Part of the 30S ribosomal subunit. Interacts with proteins S7 and S18. Binds to IF-3.

Functionally, located on the platform of the 30S subunit, it bridges several disparate RNA helices of the 16S rRNA. Forms part of the Shine-Dalgarno cleft in the 70S ribosome. In Clostridium botulinum (strain Kyoto / Type A2), this protein is Small ribosomal subunit protein uS11.